The primary structure comprises 215 residues: MSQQQGKFIVIEGLEGAGKSSAIALVNDIIKQHIGQAPVCTREPGGTPLAEKMRDLVKIADETDPLCDEAECLLIYAARTQLIANVIKPALSVGQWVLGDRHNLSSLAYQGGGRGLMPLVKAVSDACLRGFKPDLTLYLDIDPTLGLSRAASRGELDRIEQQAIDFFERARRTYLQLAHEDDSIVVIDASQSMEQVHNDIGIQLQRHLSTLMSEQ.

13–20 is an ATP binding site; the sequence is GLEGAGKS.

The protein belongs to the thymidylate kinase family.

It catalyses the reaction dTMP + ATP = dTDP + ADP. In terms of biological role, phosphorylation of dTMP to form dTDP in both de novo and salvage pathways of dTTP synthesis. The protein is Thymidylate kinase of Shewanella frigidimarina (strain NCIMB 400).